The sequence spans 368 residues: MGKGFGLLRKPCQSVVAEPQQYSALEEERTMKRKRVLSRDLCSAWDSPHGLVGLHNIGQTCCLNSLLQVFMMNMDFRMILKRITVPRSAEERKRSVPFQLLLLLEKMQDSRQKAVLPTELVQCLQKYNVPLFVQHDAAQLYLTIWNLTKDQITDTDLTERLQGLFTIWTQESLICVGCTAESSRRSKLLTLSLPLFDKDAKPLKTLEDALRCFVQPKELASSDMCCESCGEKTPWKQVLKLTHLPQTLTIHLMRFSARNSRTEKICHSVNFPQSLDFSQVLPTEEDLGDTKEQSEIHYELFAVIAHVGMADFGHYCAYIRNPVDGKWFCFNDSHVCWVTWKDVQCTYGNHRYRWRETAYLLVYTKTGS.

Residues 31 to 48 (MKRKRVLSRDLCSAWDSP) form a mediates interaction with IFNAR2 region. The mediates interaction with STAT2 stretch occupies residues 48-109 (PHGLVGLHNI…LLLLLEKMQD (62 aa)). In terms of domain architecture, USP spans 52–366 (VGLHNIGQTC…TAYLLVYTKT (315 aa)). Cys-61 (nucleophile) is an active-site residue. Residues 299 to 308 (ELFAVIAHVG) are mediates interaction with STAT2 and necessary for the negative regulation of the type I IFN signaling pathway. Residues 309–368 (MADFGHYCAYIRNPVDGKWFCFNDSHVCWVTWKDVQCTYGNHRYRWRETAYLLVYTKTGS) form a mediates interaction with IFNAR2 region. Catalysis depends on His-314, which acts as the Proton acceptor.

The protein belongs to the peptidase C19 family. In terms of assembly, interacts with STAT2; the interaction is direct. Interacts with IFNAR2; indirectly via STAT2, it negatively regulates the assembly of the ternary interferon-IFNAR1-IFNAR2 complex and inhibits type I interferon signaling. Interacts with STING1. Interacts with USP20.

It catalyses the reaction Thiol-dependent hydrolysis of ester, thioester, amide, peptide and isopeptide bonds formed by the C-terminal Gly of ubiquitin (a 76-residue protein attached to proteins as an intracellular targeting signal).. Functionally, interferon-induced ISG15-specific protease that plays a crucial role for maintaining a proper balance of ISG15-conjugated proteins in cells. Regulates protein ISGylation by efficiently cleaving ISG15 conjugates linked via isopeptide bonds. Regulates T-cell activation and T-helper 17 (Th17) cell differentiation by deubiquitinating TAK1, likely to keep TAK1-TAB complexes in steady conditions. In turn, restricts activation of NF-kappa-B, NFAT, and JNK as well as expression of IL2 in T-cells after TCR activation. Acts as a molecular adapter with USP20 to promote innate antiviral response through deubiquitinating STING1. Involved also in the negative regulation of the inflammatory response triggered by type I interferon. Upon recruitment by STAT2 to the type I interferon receptor subunit IFNAR2 interferes with the assembly of the ternary interferon-IFNAR1-IFNAR2 complex and acts as a negative regulator of the type I interferon signaling pathway. The protein is Ubl carboxyl-terminal hydrolase 18 (Usp18) of Mus musculus (Mouse).